The chain runs to 651 residues: Threonine--tRNA ligase (651 aa).

One can recognise a TGS domain in the interval 1-64 (MSSVVHVTLP…EKDCTLQVLT (64 aa)). Residues 245-535 (DHRRLGPELG…LTEHYAGNFP (291 aa)) are catalytic. 3 residues coordinate Zn(2+): Cys336, His387, and His512.

It belongs to the class-II aminoacyl-tRNA synthetase family. In terms of assembly, homodimer. The cofactor is Zn(2+).

The protein resides in the cytoplasm. It carries out the reaction tRNA(Thr) + L-threonine + ATP = L-threonyl-tRNA(Thr) + AMP + diphosphate + H(+). Catalyzes the attachment of threonine to tRNA(Thr) in a two-step reaction: L-threonine is first activated by ATP to form Thr-AMP and then transferred to the acceptor end of tRNA(Thr). Also edits incorrectly charged L-seryl-tRNA(Thr). This is Threonine--tRNA ligase from Symbiobacterium thermophilum (strain DSM 24528 / JCM 14929 / IAM 14863 / T).